The primary structure comprises 207 residues: Large ribosomal subunit protein uL4 (207 aa).

Positions 44–78 are disordered; the sequence is MRQGTHKTKNRAEVSGGGRKPWRQKGTGRARQGSI.

It belongs to the universal ribosomal protein uL4 family. In terms of assembly, part of the 50S ribosomal subunit.

In terms of biological role, one of the primary rRNA binding proteins, this protein initially binds near the 5'-end of the 23S rRNA. It is important during the early stages of 50S assembly. It makes multiple contacts with different domains of the 23S rRNA in the assembled 50S subunit and ribosome. Functionally, this protein when expressed in E.coli represses the endogenous S10 operon; this may not occur in B.stearothermophilus however. Forms part of the polypeptide exit tunnel. The sequence is that of Large ribosomal subunit protein uL4 (rplD) from Geobacillus stearothermophilus (Bacillus stearothermophilus).